Here is a 764-residue protein sequence, read N- to C-terminus: MTILSHILGFPRIGLHRELKRAQESYWDGHITQQQLLNTGRELRACHWQQQKQAGLNMLPVGDFAWYDHVLTTSLMLDNVPVRHRNDDGSSNIDTLYRIGRGNAPTGQPVVASEMTKWFNTNYHYIVPEFTVGQQFRLGWTQLIEEVDEALALGYNIKPILLGPISYLWLGKAKEKHFDRLSLLSALLPVYQQILALLAQRGIEWVQIDEPALVLELPTAWCNAYYDAYTDALQGYSKLLLTTYFDSIGHHLNIITNLSVHGLHVDLIAGNDDVEVLHRTLPSNWVLSAGVINGRNVWRADLPSKFKQLRSLVGQRELWVGSSCSLLHSPIDLSIETRMDPEVKSWFAFTIQKCNELKLLCNALNRLDDTKYQAILADYSAPLWARQTSEKVHNRQVKIRTEQITENHSQRQQHYLDRINVQRARFNLPILPTTTIGSFPQTTAIRSLRLDLKSGRIDNEYYKNAICNHIKQAITEQDALGLDVLVHGEAERNDMVEYFGEHLNGFIFTQNGWVQSYGSRCVKPPIIIGDISRPKPITVEWAWYAQSLTQKPVKGMLTGPVTILCWSFPREDLDRKTIARQIALALRDEVIDLENAGIGIIQIDEPALREGLPLKYSAWKEYLTWAVEAFRLNAAVAKNNTQIHTHMCYSEFNDIMDSIIAMDADVITIETSRSNMKLLDTFKQYQYPNDIGPGVYDIHSPNIPSEDDIIQLLRKAAQVIPIKRLWVNPDCGLKTRTWLETRKALSNMVNAAHKLRREEEYNRS.

5-methyltetrahydropteroyltri-L-glutamate-binding positions include 17-20 and K117; that span reads RELK. L-homocysteine contacts are provided by residues 436–438 and E489; that span reads IGS. Residues 436–438 and E489 contribute to the L-methionine site; that span reads IGS. Residues 520-521 and W566 each bind 5-methyltetrahydropteroyltri-L-glutamate; that span reads RC. L-homocysteine is bound at residue D604. Position 604 (D604) interacts with L-methionine. A 5-methyltetrahydropteroyltri-L-glutamate-binding site is contributed by E610. Zn(2+) is bound by residues H646, C648, and E670. Residue H699 is the Proton donor of the active site. C731 is a Zn(2+) binding site.

Belongs to the vitamin-B12 independent methionine synthase family. Zn(2+) serves as cofactor.

The enzyme catalyses 5-methyltetrahydropteroyltri-L-glutamate + L-homocysteine = tetrahydropteroyltri-L-glutamate + L-methionine. Its pathway is amino-acid biosynthesis; L-methionine biosynthesis via de novo pathway; L-methionine from L-homocysteine (MetE route): step 1/1. Catalyzes the transfer of a methyl group from 5-methyltetrahydrofolate to homocysteine resulting in methionine formation. This Baumannia cicadellinicola subsp. Homalodisca coagulata protein is 5-methyltetrahydropteroyltriglutamate--homocysteine methyltransferase.